The following is a 439-amino-acid chain: Ribosomal protein uS12 methylthiotransferase RimO (439 aa).

Positions 7-122 constitute an MTTase N-terminal domain; it reads QTIAVIALGC…LPDLVFGKNF (116 aa). [4Fe-4S] cluster is bound by residues Cys-16, Cys-52, Cys-85, Cys-155, Cys-159, and Cys-162. Residues 141-369 form the Radical SAM core domain; it reads SSTIPSAYLK…NAQYNIFQAK (229 aa).

Belongs to the methylthiotransferase family. RimO subfamily. The cofactor is [4Fe-4S] cluster.

It localises to the cytoplasm. It carries out the reaction L-aspartate(89)-[ribosomal protein uS12]-hydrogen + (sulfur carrier)-SH + AH2 + 2 S-adenosyl-L-methionine = 3-methylsulfanyl-L-aspartate(89)-[ribosomal protein uS12]-hydrogen + (sulfur carrier)-H + 5'-deoxyadenosine + L-methionine + A + S-adenosyl-L-homocysteine + 2 H(+). Functionally, catalyzes the methylthiolation of an aspartic acid residue of ribosomal protein uS12. This chain is Ribosomal protein uS12 methylthiotransferase RimO, found in Endomicrobium trichonymphae.